The following is a 213-amino-acid chain: Methylthioribulose-1-phosphate dehydratase (213 aa).

The Zn(2+) site is built by H104 and H106.

This sequence belongs to the aldolase class II family. MtnB subfamily. Zn(2+) is required as a cofactor.

It catalyses the reaction 5-(methylsulfanyl)-D-ribulose 1-phosphate = 5-methylsulfanyl-2,3-dioxopentyl phosphate + H2O. It participates in amino-acid biosynthesis; L-methionine biosynthesis via salvage pathway; L-methionine from S-methyl-5-thio-alpha-D-ribose 1-phosphate: step 2/6. Catalyzes the dehydration of methylthioribulose-1-phosphate (MTRu-1-P) into 2,3-diketo-5-methylthiopentyl-1-phosphate (DK-MTP-1-P). The protein is Methylthioribulose-1-phosphate dehydratase of Stenotrophomonas maltophilia (strain R551-3).